A 203-amino-acid polypeptide reads, in one-letter code: Microtubule-associated protein Jupiter (203 aa).

The residue at position 30 (serine 30) is a Phosphoserine. Residues threonine 41 and threonine 102 each carry the phosphothreonine modification. The span at 123 to 132 (LISKGNYNGK) shows a compositional bias: polar residues. Disordered stretches follow at residues 123-163 (LISK…GNPV) and 182-203 (NGGS…SGLW). Over residues 133–146 (SGSVSSASSSVSSS) the composition is skewed to low complexity. Residues serine 135 and serine 146 each carry the phosphoserine modification.

This sequence belongs to the MAP Jupiter family.

Its subcellular location is the nucleus. It is found in the cytoplasm. The protein resides in the cytoskeleton. It localises to the spindle. Functionally, binds to all microtubule populations. This chain is Microtubule-associated protein Jupiter, found in Drosophila mojavensis (Fruit fly).